Reading from the N-terminus, the 289-residue chain is Acetyl-coenzyme A carboxylase carboxyl transferase subunit beta (289 aa).

Positions 34–289 (MWVKCNKCGE…KLINMHQNSF (256 aa)) constitute a CoA carboxyltransferase N-terminal domain. Residues Cys-38, Cys-41, Cys-57, and Cys-60 each coordinate Zn(2+). A C4-type zinc finger spans residues 38 to 60 (CNKCGEILYQNDLEKNYMVCNLC).

The protein belongs to the AccD/PCCB family. As to quaternary structure, acetyl-CoA carboxylase is a heterohexamer composed of biotin carboxyl carrier protein (AccB), biotin carboxylase (AccC) and two subunits each of ACCase subunit alpha (AccA) and ACCase subunit beta (AccD). Zn(2+) serves as cofactor.

The protein resides in the cytoplasm. The catalysed reaction is N(6)-carboxybiotinyl-L-lysyl-[protein] + acetyl-CoA = N(6)-biotinyl-L-lysyl-[protein] + malonyl-CoA. Its pathway is lipid metabolism; malonyl-CoA biosynthesis; malonyl-CoA from acetyl-CoA: step 1/1. Component of the acetyl coenzyme A carboxylase (ACC) complex. Biotin carboxylase (BC) catalyzes the carboxylation of biotin on its carrier protein (BCCP) and then the CO(2) group is transferred by the transcarboxylase to acetyl-CoA to form malonyl-CoA. In Clostridium botulinum (strain Kyoto / Type A2), this protein is Acetyl-coenzyme A carboxylase carboxyl transferase subunit beta.